The sequence spans 256 residues: tRNA (guanine-N(7)-)-methyltransferase (256 aa).

The segment at 17–45 is disordered; that stretch reads TCETVPGLPQKKHYRQRAHSNPHSDHDIE. Basic residues predominate over residues 26 to 36; the sequence is QKKHYRQRAHS. S-adenosyl-L-methionine is bound by residues Gly-74, 97 to 98, 132 to 133, and Leu-152; these read EI and NA. Asp-155 is an active-site residue. Position 230–232 (230–232) interacts with S-adenosyl-L-methionine; that stretch reads TEE.

This sequence belongs to the class I-like SAM-binding methyltransferase superfamily. TrmB family.

It localises to the nucleus. It carries out the reaction guanosine(46) in tRNA + S-adenosyl-L-methionine = N(7)-methylguanosine(46) in tRNA + S-adenosyl-L-homocysteine. The protein operates within tRNA modification; N(7)-methylguanine-tRNA biosynthesis. Functionally, catalyzes the formation of N(7)-methylguanine at position 46 (m7G46) in tRNA. This is tRNA (guanine-N(7)-)-methyltransferase from Caenorhabditis elegans.